The sequence spans 331 residues: Ketol-acid reductoisomerase (NADP(+)) (331 aa).

Positions 2-182 (ARMYYDSDAN…GGTRAGILET (181 aa)) constitute a KARI N-terminal Rossmann domain. NADP(+) is bound by residues 25 to 28 (YGSQ), serine 51, serine 53, and 83 to 86 (DEVQ). Residue histidine 108 is part of the active site. Glycine 134 serves as a coordination point for NADP(+). The 146-residue stretch at 183 to 328 (TFREETETDL…KDLRAMFSWL (146 aa)) folds into the KARI C-terminal knotted domain. Residues aspartate 191, glutamate 195, glutamate 227, and glutamate 231 each coordinate Mg(2+). Position 252 (serine 252) interacts with substrate.

The protein belongs to the ketol-acid reductoisomerase family. The cofactor is Mg(2+).

The enzyme catalyses (2R)-2,3-dihydroxy-3-methylbutanoate + NADP(+) = (2S)-2-acetolactate + NADPH + H(+). The catalysed reaction is (2R,3R)-2,3-dihydroxy-3-methylpentanoate + NADP(+) = (S)-2-ethyl-2-hydroxy-3-oxobutanoate + NADPH + H(+). It functions in the pathway amino-acid biosynthesis; L-isoleucine biosynthesis; L-isoleucine from 2-oxobutanoate: step 2/4. The protein operates within amino-acid biosynthesis; L-valine biosynthesis; L-valine from pyruvate: step 2/4. Its function is as follows. Involved in the biosynthesis of branched-chain amino acids (BCAA). Catalyzes an alkyl-migration followed by a ketol-acid reduction of (S)-2-acetolactate (S2AL) to yield (R)-2,3-dihydroxy-isovalerate. In the isomerase reaction, S2AL is rearranged via a Mg-dependent methyl migration to produce 3-hydroxy-3-methyl-2-ketobutyrate (HMKB). In the reductase reaction, this 2-ketoacid undergoes a metal-dependent reduction by NADPH to yield (R)-2,3-dihydroxy-isovalerate. This Trichodesmium erythraeum (strain IMS101) protein is Ketol-acid reductoisomerase (NADP(+)).